The chain runs to 287 residues: Co-chaperone protein DjlA (287 aa).

Topologically, residues 1 to 6 (MQIFGK) are periplasmic. A helical transmembrane segment spans residues 7-30 (ILGAFFGFLFGGVFGALFGLFIGH). Residues 31–287 (QFDKARRLSQ…DLIKKEKGFK (257 aa)) are Cytoplasmic-facing. Residues 192–213 (GGFGGQQHQSHHSSSHGGWQQA) form a disordered region. The 67-residue stretch at 221 to 287 (DAYKILGIDA…DLIKKEKGFK (67 aa)) folds into the J domain.

Homodimer.

The protein localises to the cell inner membrane. Functionally, regulatory DnaK co-chaperone. Direct interaction between DnaK and DjlA is needed for the induction of the wcaABCDE operon, involved in the synthesis of a colanic acid polysaccharide capsule, possibly through activation of the RcsB/RcsC phosphotransfer signaling pathway. The colanic acid capsule may help the bacterium survive conditions outside the host. In Vibrio vulnificus (strain YJ016), this protein is Co-chaperone protein DjlA.